We begin with the raw amino-acid sequence, 751 residues long: Photosystem I P700 chlorophyll a apoprotein A1 (751 aa).

8 helical membrane-spanning segments follow: residues 73 to 96 (VFSA…FHGA), 159 to 182 (LYST…WHYH), 198 to 222 (MNHH…HIAL), 294 to 312 (MAHH…GHQY), 349 to 372 (WHAQ…HHMY), 388 to 414 (LSLF…IFMV), 436 to 458 (AIIS…LYIH), and 533 to 551 (FMVH…LILL). [4Fe-4S] cluster-binding residues include Cys575 and Cys584. Transmembrane regions (helical) follow at residues 591-612 (HVFL…HFSW) and 665-687 (LSAY…MFLF). Chlorophyll a' is bound at residue His676. Chlorophyll a is bound by residues Met684 and Tyr692. Residue Trp693 participates in phylloquinone binding. Residues 725–745 (AVGVAHYLLGGIATTWSFFLA) traverse the membrane as a helical segment.

The protein belongs to the PsaA/PsaB family. As to quaternary structure, the PsaA/B heterodimer binds the P700 chlorophyll special pair and subsequent electron acceptors. PSI consists of a core antenna complex that captures photons, and an electron transfer chain that converts photonic excitation into a charge separation. The eukaryotic PSI reaction center is composed of at least 11 subunits. It depends on P700 is a chlorophyll a/chlorophyll a' dimer, A0 is one or more chlorophyll a, A1 is one or both phylloquinones and FX is a shared 4Fe-4S iron-sulfur center. as a cofactor.

It is found in the plastid. The protein resides in the chloroplast thylakoid membrane. It catalyses the reaction reduced [plastocyanin] + hnu + oxidized [2Fe-2S]-[ferredoxin] = oxidized [plastocyanin] + reduced [2Fe-2S]-[ferredoxin]. Functionally, psaA and PsaB bind P700, the primary electron donor of photosystem I (PSI), as well as the electron acceptors A0, A1 and FX. PSI is a plastocyanin/cytochrome c6-ferredoxin oxidoreductase, converting photonic excitation into a charge separation, which transfers an electron from the donor P700 chlorophyll pair to the spectroscopically characterized acceptors A0, A1, FX, FA and FB in turn. Oxidized P700 is reduced on the lumenal side of the thylakoid membrane by plastocyanin or cytochrome c6. The protein is Photosystem I P700 chlorophyll a apoprotein A1 of Ostreococcus tauri.